The following is a 236-amino-acid chain: Uridylate kinase (236 aa).

Gly10–Ser11 contributes to the ATP binding site. Gly44 is a UMP binding site. Residues Gly45 and Arg49 each coordinate ATP. UMP-binding positions include Asp66 and Ile114–Thr120. Positions 140, 146, and 149 each coordinate ATP.

Belongs to the UMP kinase family. In terms of assembly, homohexamer.

It localises to the cytoplasm. It carries out the reaction UMP + ATP = UDP + ADP. Its pathway is pyrimidine metabolism; CTP biosynthesis via de novo pathway; UDP from UMP (UMPK route): step 1/1. With respect to regulation, inhibited by UTP. Catalyzes the reversible phosphorylation of UMP to UDP. The protein is Uridylate kinase of Methanospirillum hungatei JF-1 (strain ATCC 27890 / DSM 864 / NBRC 100397 / JF-1).